We begin with the raw amino-acid sequence, 476 residues long: Acidic leucine-rich nuclear phosphoprotein 32-related protein 1 (476 aa).

LRR repeat units follow at residues 51-72, 73-92, and 98-119; these read SLEH…PRLR, NLTR…DHLV, and SLRD…SPLA. The LRRCT domain occupies 131 to 169; sequence CPVTRVKDYRSKVFGMIRTLKYLDKMDADENERPESDDD. The tract at residues 157–476 is disordered; it reads DADENERPES…VEDLRPFKHH (320 aa). Composition is skewed to acidic residues over residues 165 to 194, 222 to 232, 252 to 289, 299 to 329, 353 to 371, 379 to 396, 415 to 436, and 458 to 467; these read ESDD…EDPG, DVDEDESDADE, GDED…EDAV, SDEE…EAEP, EGED…EERL, EGND…EDTE, DAAE…DDGG, and GDDDEDDDGV.

Belongs to the ANP32 family.

The sequence is that of Acidic leucine-rich nuclear phosphoprotein 32-related protein 1 from Oryza sativa subsp. japonica (Rice).